The sequence spans 102 residues: Thioredoxin (102 aa).

One can recognise a Thioredoxin domain in the interval Met1–Ala102. Cys28 and Cys31 are joined by a disulfide.

This sequence belongs to the thioredoxin family.

Participates in various redox reactions through the reversible oxidation of its active center dithiol to a disulfide and catalyzes dithiol-disulfide exchange reactions. In Chlamydia pneumoniae (Chlamydophila pneumoniae), this protein is Thioredoxin (trxA).